We begin with the raw amino-acid sequence, 130 residues long: Small ribosomal subunit protein uS8 (130 aa).

This sequence belongs to the universal ribosomal protein uS8 family. In terms of assembly, component of the 40S ribosomal subunit. Part of the small subunit (SSU) processome, composed of more than 70 proteins and the RNA chaperone small nucleolar RNA (snoRNA) U3.

Its subcellular location is the cytoplasm. The protein localises to the nucleus. It localises to the nucleolus. In terms of biological role, component of the small ribosomal subunit. Part of the small subunit (SSU) processome, first precursor of the small eukaryotic ribosomal subunit. During the assembly of the SSU processome in the nucleolus, many ribosome biogenesis factors, an RNA chaperone and ribosomal proteins associate with the nascent pre-rRNA and work in concert to generate RNA folding, modifications, rearrangements and cleavage as well as targeted degradation of pre-ribosomal RNA by the RNA exosome. Required for erythropoiesis during embryonic development. This is Small ribosomal subunit protein uS8 from Danio rerio (Zebrafish).